Here is a 353-residue protein sequence, read N- to C-terminus: uncharacterized protein (353 aa).

The N-terminal stretch at 1-30 (MHLRHLFSSRLRGSLLLGSLLVVSSFSTQA) is a signal peptide.

As to quaternary structure, monomer.

This is an uncharacterized protein from Escherichia coli (strain K12).